Here is an 81-residue protein sequence, read N- to C-terminus: MTETEILERIRSIFQENFAIDPARVTPEAHLFEELDLDSIDAVDLAIKLQEMTGRRIKPEEFKSVRTVGDVIGAVQSLLAA.

The Carrier domain maps to 1 to 79 (MTETEILERI…DVIGAVQSLL (79 aa)). The residue at position 39 (Ser39) is an O-(pantetheine 4'-phosphoryl)serine.

It belongs to the acyl carrier protein (ACP) family. In terms of processing, 4'-phosphopantetheine is transferred from CoA to a specific serine of apo-ACP by AcpS. This modification is essential for activity because fatty acids are bound in thioester linkage to the sulfhydryl of the prosthetic group.

The protein resides in the cytoplasm. It functions in the pathway lipid metabolism; fatty acid biosynthesis. Its function is as follows. Carrier of the growing fatty acid chain in fatty acid biosynthesis. This Ralstonia nicotianae (strain ATCC BAA-1114 / GMI1000) (Ralstonia solanacearum) protein is Acyl carrier protein 2.